The chain runs to 2617 residues: DNA-directed RNA polymerase subunit beta'' (2617 aa).

Zn(2+) is bound by residues cysteine 263, cysteine 334, cysteine 341, and cysteine 344.

The protein belongs to the RNA polymerase beta' chain family. RpoC2 subfamily. As to quaternary structure, in plastids the minimal PEP RNA polymerase catalytic core is composed of four subunits: alpha, beta, beta', and beta''. When a (nuclear-encoded) sigma factor is associated with the core the holoenzyme is formed, which can initiate transcription. It depends on Zn(2+) as a cofactor.

The protein resides in the plastid. It localises to the chloroplast. It carries out the reaction RNA(n) + a ribonucleoside 5'-triphosphate = RNA(n+1) + diphosphate. Its function is as follows. DNA-dependent RNA polymerase catalyzes the transcription of DNA into RNA using the four ribonucleoside triphosphates as substrates. The polypeptide is DNA-directed RNA polymerase subunit beta'' (Oedogonium cardiacum (Filamentous green alga)).